The sequence spans 192 residues: Ion-translocating oxidoreductase complex subunit A (192 aa).

Transmembrane regions (helical) follow at residues 5–25 (ILLLVGTVLVNNFVLVKFLGL), 39–59 (IGMGLATTFVLTLASVCAYLV), 67–87 (LGIEYLRTMSFILVIAVVVQF), 102–122 (LLGIFLPLITTNCAVLGVALL), 134–154 (IIYGFGAAVGFSLVLILFASM), and 171–191 (SIAMITAGLMSLAFMGFTGLV).

The protein belongs to the NqrDE/RnfAE family. The complex is composed of six subunits: RnfA, RnfB, RnfC, RnfD, RnfE and RnfG.

It is found in the cell inner membrane. In terms of biological role, part of a membrane-bound complex that couples electron transfer with translocation of ions across the membrane. The polypeptide is Ion-translocating oxidoreductase complex subunit A (Vibrio campbellii (strain ATCC BAA-1116)).